The sequence spans 158 residues: Large ribosomal subunit protein uL16 (158 aa).

The protein belongs to the universal ribosomal protein uL16 family. As to quaternary structure, part of the 50S ribosomal subunit.

Functionally, binds 23S rRNA and is also seen to make contacts with the A and possibly P site tRNAs. The chain is Large ribosomal subunit protein uL16 from Prochlorococcus marinus (strain MIT 9303).